Reading from the N-terminus, the 682-residue chain is Potassium-transporting ATPase ATP-binding subunit (682 aa).

Transmembrane regions (helical) follow at residues 34-54 (PVMF…IAMA), 62-82 (ALFS…ANFA), 219-239 (IALT…TATL), and 254-274 (VLVA…LSAI). Asp-307 functions as the 4-aspartylphosphate intermediate in the catalytic mechanism. Residues Asp-344, Glu-348, 377–384 (FTAQSRMS), and Lys-395 contribute to the ATP site. Positions 518 and 522 each coordinate Mg(2+). 3 consecutive transmembrane segments (helical) span residues 588 to 608 (FAII…LNIM), 616 to 636 (AILS…PLAL), and 656 to 676 (IYGL…DLLL).

This sequence belongs to the cation transport ATPase (P-type) (TC 3.A.3) family. Type IA subfamily. The system is composed of three essential subunits: KdpA, KdpB and KdpC.

The protein resides in the cell inner membrane. The enzyme catalyses K(+)(out) + ATP + H2O = K(+)(in) + ADP + phosphate + H(+). Its function is as follows. Part of the high-affinity ATP-driven potassium transport (or Kdp) system, which catalyzes the hydrolysis of ATP coupled with the electrogenic transport of potassium into the cytoplasm. This subunit is responsible for energy coupling to the transport system and for the release of the potassium ions to the cytoplasm. This is Potassium-transporting ATPase ATP-binding subunit from Escherichia coli O9:H4 (strain HS).